Reading from the N-terminus, the 87-residue chain is Small ribosomal subunit protein bS20 (87 aa).

The interval 1 to 29 is disordered; that stretch reads MANTAQARKRARQAVKQNAHNSSQRSTLR. Residues 20 to 29 show a composition bias toward polar residues; it reads HNSSQRSTLR.

The protein belongs to the bacterial ribosomal protein bS20 family.

In terms of biological role, binds directly to 16S ribosomal RNA. This Herminiimonas arsenicoxydans protein is Small ribosomal subunit protein bS20.